We begin with the raw amino-acid sequence, 124 residues long: Large ribosomal subunit protein bL19 (124 aa).

This sequence belongs to the bacterial ribosomal protein bL19 family.

This protein is located at the 30S-50S ribosomal subunit interface and may play a role in the structure and function of the aminoacyl-tRNA binding site. The sequence is that of Large ribosomal subunit protein bL19 from Orientia tsutsugamushi (strain Boryong) (Rickettsia tsutsugamushi).